The chain runs to 273 residues: Zinc finger protein 80 (273 aa).

A C2H2-type 1 zinc finger spans residues 49 to 71 (YKCKECGSVFNKNSLLVRHQQIH). The segment at 77–99 (YEYQECGKAFPEKVDFVRHMRIH) adopts a C2H2-type 2; degenerate zinc-finger fold. The segment at 105-127 (CKCVECRKVFNRRSHLLCYRQIH) adopts a C2H2-type 3; atypical zinc-finger fold. C2H2-type zinc fingers lie at residues 133-155 (YECS…RVTH), 161-183 (FGCK…MKIH), 187-211 (KPCK…SMTH), and 217-239 (YECK…TRSH).

Belongs to the krueppel C2H2-type zinc-finger protein family.

It localises to the nucleus. In terms of biological role, may be involved in transcriptional regulation. This Pan troglodytes (Chimpanzee) protein is Zinc finger protein 80 (ZNF80).